Here is a 150-residue protein sequence, read N- to C-terminus: Snaclec bothrojaracin subunit beta (150 aa).

The signal sequence occupies residues 1 to 23; the sequence is MGRFIFVSFGLLVVFLSLSGTAA. Disulfide bonds link C25–C36, C53–C146, and C123–C138. A C-type lectin domain is found at 32–147; that stretch reads YEGSCYRVFE…CTKLEYFVCE (116 aa).

The protein belongs to the snaclec family. As to quaternary structure, heterodimer of subunits alpha and beta; disulfide-linked. Expressed by the venom gland.

It localises to the secreted. In terms of biological role, this potent antithrombotic agent acts in a calcium-independent manner. Exerts its anticoagulant effect by two distinct mechanisms. It binds to activated thrombin through exosite 1, blocking fibrinogen clotting, platelet activation, factor V activation and other effects, and it interacts with prothrombin (F2), decreasing its proteolytic activation -especially in the presence of factor Va. In vivo, intravenous injection before thrombosis induction causes a significant decrease in thrombus weight. Furthermore, BJC shows a prolonged effect by remaining in the plasma bound to prothrombin for at least 12 hours. In Bothrops jararaca (Jararaca), this protein is Snaclec bothrojaracin subunit beta.